The sequence spans 177 residues: ATP synthase subunit delta (177 aa).

Belongs to the ATPase delta chain family. In terms of assembly, F-type ATPases have 2 components, F(1) - the catalytic core - and F(0) - the membrane proton channel. F(1) has five subunits: alpha(3), beta(3), gamma(1), delta(1), epsilon(1). F(0) has three main subunits: a(1), b(2) and c(10-14). The alpha and beta chains form an alternating ring which encloses part of the gamma chain. F(1) is attached to F(0) by a central stalk formed by the gamma and epsilon chains, while a peripheral stalk is formed by the delta and b chains.

It is found in the cell inner membrane. F(1)F(0) ATP synthase produces ATP from ADP in the presence of a proton or sodium gradient. F-type ATPases consist of two structural domains, F(1) containing the extramembraneous catalytic core and F(0) containing the membrane proton channel, linked together by a central stalk and a peripheral stalk. During catalysis, ATP synthesis in the catalytic domain of F(1) is coupled via a rotary mechanism of the central stalk subunits to proton translocation. Functionally, this protein is part of the stalk that links CF(0) to CF(1). It either transmits conformational changes from CF(0) to CF(1) or is implicated in proton conduction. In Psychromonas ingrahamii (strain DSM 17664 / CCUG 51855 / 37), this protein is ATP synthase subunit delta.